Here is a 447-residue protein sequence, read N- to C-terminus: Ribosomal protein uS12 methylthiotransferase RimO (447 aa).

The MTTase N-terminal domain occupies 4–114 (PKVGFVSLGC…VMEAVHEYVP (111 aa)). The [4Fe-4S] cluster site is built by cysteine 13, cysteine 49, cysteine 78, cysteine 147, cysteine 151, and cysteine 154. Residues 133 to 370 (LTPKHYAYLK…MQVQQQISAA (238 aa)) form the Radical SAM core domain. In terms of domain architecture, TRAM spans 373 to 443 (QKRIGQTMTV…EYDLFAKLIK (71 aa)).

This sequence belongs to the methylthiotransferase family. RimO subfamily. The cofactor is [4Fe-4S] cluster.

The protein localises to the cytoplasm. It catalyses the reaction L-aspartate(89)-[ribosomal protein uS12]-hydrogen + (sulfur carrier)-SH + AH2 + 2 S-adenosyl-L-methionine = 3-methylsulfanyl-L-aspartate(89)-[ribosomal protein uS12]-hydrogen + (sulfur carrier)-H + 5'-deoxyadenosine + L-methionine + A + S-adenosyl-L-homocysteine + 2 H(+). Functionally, catalyzes the methylthiolation of an aspartic acid residue of ribosomal protein uS12. The sequence is that of Ribosomal protein uS12 methylthiotransferase RimO from Acinetobacter baumannii (strain AB0057).